The chain runs to 65 residues: VESP-VB1 (65 aa).

The signal sequence occupies residues 1–23 (MKMSILFLFALIASLACLQLTFA). AXPX repeat units lie at residues 23–26 (AAPA), 27–30 (ASPL), 31–34 (ANPG), 35–38 (ASPE), 39–42 (AAPL), 43–46 (ADPL), and 47–50 (ADPF). Positions 24–49 (APAASPLANPGASPEAAPLADPLADP) are excised as a propeptide. Leu-62 is subject to Leucine amide.

As to expression, expressed by the venom gland.

It is found in the secreted. Functionally, antimicrobial peptide. Shows activity against both Gram-positive (S.aureus MIC=1.0-3.75 ug/ml) and -negative (E.coli MIC=7.5-15 ug/ml) bacteria, as well against fungi (C.albicans MIC=30 ug/ml). Also promotes important mast cell degranulation. Shows little hemolytic activity on rabbit and human erythrocytes. Its mast cell degranulation activity may be related to the activation of G-protein coupled receptors in mast cells as well as interaction with other proteins located in cell endosomal membranes in the mast cells. The chain is VESP-VB1 from Vespa bicolor (Black shield wasp).